Here is an 81-residue protein sequence, read N- to C-terminus: Small ribosomal subunit protein bS16 (81 aa).

It belongs to the bacterial ribosomal protein bS16 family.

In Neisseria meningitidis serogroup C (strain 053442), this protein is Small ribosomal subunit protein bS16.